We begin with the raw amino-acid sequence, 364 residues long: Methylthioribose-1-phosphate isomerase (364 aa).

The active-site Proton donor is the aspartate 254.

Belongs to the eIF-2B alpha/beta/delta subunits family. MtnA subfamily.

The protein resides in the cytoplasm. The protein localises to the nucleus. It catalyses the reaction 5-(methylsulfanyl)-alpha-D-ribose 1-phosphate = 5-(methylsulfanyl)-D-ribulose 1-phosphate. Its pathway is amino-acid biosynthesis; L-methionine biosynthesis via salvage pathway; L-methionine from S-methyl-5-thio-alpha-D-ribose 1-phosphate: step 1/6. In terms of biological role, catalyzes the interconversion of methylthioribose-1-phosphate (MTR-1-P) into methylthioribulose-1-phosphate (MTRu-1-P). The chain is Methylthioribose-1-phosphate isomerase from Drosophila yakuba (Fruit fly).